The primary structure comprises 808 residues: Aminotransferase ALT4 (808 aa).

The protein belongs to the class-II pyridoxal-phosphate-dependent aminotransferase family. BioF subfamily. Requires pyridoxal 5'-phosphate as cofactor.

It participates in mycotoxin biosynthesis. In terms of biological role, aminotransferase; part of the gene cluster that mediates the biosynthesis of the host-selective toxins (HSTs) AAL-toxins, sphinganine-analog mycotoxins responsible for Alternaria stem canker on tomato by the tomato pathotype. The biosynthesis starts with the polyketide synthase ALT1-catalyzed C-16 carbon chain assembly from one starter acetyl-CoA unit with malonyl-CoA extender units. ALT1 also selectively transfers methyl groups at the first and the third cycle of chain elongation for AAL toxin. The C-16 polyketide chain is released from the enzyme by a nucleophilic attack of a carbanion, which is derived from R-carbon of glycin by decarboxylation, on the carbonyl carbon of polyketide acyl chain. This step is probably catalyzed by a pyridoxal 5'-phosphate-dependent aminoacyl transferase ALT4. The respective functions of the other enzymes encoded by the cluster have still to be elucidated. The sphingosine N-acyltransferase-like protein ALT7 seems not to act as a resistance/self-tolerance factor against the toxin in the toxin biosynthetic gene cluster, contrary to what is expected. The sequence is that of Aminotransferase ALT4 from Alternaria alternata (Alternaria rot fungus).